Here is a 270-residue protein sequence, read N- to C-terminus: MTWWEALLLGLIQGLTEFIPVSSSGHLVLGQYLLGLDKEAADVTFEVFVHFGTVLSILTVYWDDVAELVEEAWAGLRAPRAVPTRFAENDTFRLGVFILVTLVPTGVAYVLFREPLEQAFGSPRFTSAMLVGTGVLLLLTRIGPRPDGDLSGVKAFVVGVAQSCALVPGISRSGATICTALYQNVAPERAANFSFLMLLPVVLGGTVLKGLELMEQGVGAAGLSLGIGTVAAYGSGIGAIYVVLDVVRRGNLQYFAYYCFLIGGLGLWLL.

7 helical membrane-spanning segments follow: residues M1–V21, F92–F112, A119–L139, L150–I170, F193–L213, L223–V243, and G250–L270.

This sequence belongs to the UppP family.

The protein resides in the cell inner membrane. It catalyses the reaction di-trans,octa-cis-undecaprenyl diphosphate + H2O = di-trans,octa-cis-undecaprenyl phosphate + phosphate + H(+). Catalyzes the dephosphorylation of undecaprenyl diphosphate (UPP). Confers resistance to bacitracin. This Salinibacter ruber (strain DSM 13855 / M31) protein is Undecaprenyl-diphosphatase.